The sequence spans 206 residues: Platelet glycoprotein Ib beta chain (206 aa).

Residues 1–26 (MGSRPRGALSLLLLLLALLSRPASGC) form the signal peptide. 2 disulfides stabilise this stretch: Cys-26–Cys-32 and Cys-30–Cys-39. The 29-residue stretch at 27–55 (PAPCSCAGTLVDCGRRGLTWASLPAAFPP) folds into the LRRNT domain. The Extracellular portion of the chain corresponds to 27-147 (PAPCSCAGTL…RAACAPGLLC (121 aa)). An LRR repeat occupies 60 to 83 (LVLTGNNLTALPPGLLDALPALRA). Asn-66 carries an N-linked (GlcNAc...) asparagine glycan. Positions 89-143 (NPWRCDCRLLPLRAWLAGRPERAPYRDLRCVAPPALRGRLLPYVAEDELRAACAP) constitute an LRRCT domain. Disulfide bonds link Cys-93–Cys-118 and Cys-95–Cys-141. The helical transmembrane segment at 148 to 172 (WGALVAQLALLVLGLLHALLLALLL) threads the bilayer. The Cytoplasmic portion of the chain corresponds to 173-206 (GRLRRLRARARARSIQEFSLTAPLVAESARGGAS). Phosphoserine occurs at positions 186 and 191. Thr-193 is subject to Phosphothreonine. At Ser-200 the chain carries Phosphoserine.

Two GP-Ib beta are disulfide-linked to one GP-Ib alpha. GP-IX is complexed with the GP-Ib heterodimer via a non covalent linkage. Interacts with TRAF4.

It localises to the membrane. In terms of biological role, gp-Ib, a surface membrane protein of platelets, participates in the formation of platelet plugs by binding to von Willebrand factor, which is already bound to the subendothelium. The chain is Platelet glycoprotein Ib beta chain (Gp1bb) from Mus musculus (Mouse).